We begin with the raw amino-acid sequence, 266 residues long: Lectin 7 (266 aa).

Residues 1–27 (MAINTSRTQILFITIISFLILAQNVNS) form the signal peptide. 3 N-linked (GlcNAc...) asparagine glycosylation sites follow: N121, N205, and N219.

The protein belongs to the leguminous lectin family.

May be involved in arbuscular mycorrhizal (AM) symbiosis with AM fungi. The sequence is that of Lectin 7 from Medicago truncatula (Barrel medic).